Here is a 441-residue protein sequence, read N- to C-terminus: Cysteine--tRNA ligase (441 aa).

Cys-24 provides a ligand contact to Zn(2+). Residues 26–36 (PTVYNYIHIGN) carry the 'HIGH' region motif. Residues Cys-204, His-230, and Glu-234 each coordinate Zn(2+). Residues 262–266 (KMSKS) carry the 'KMSKS' region motif. Lys-265 serves as a coordination point for ATP.

The protein belongs to the class-I aminoacyl-tRNA synthetase family. Monomer. The cofactor is Zn(2+).

The protein resides in the cytoplasm. The enzyme catalyses tRNA(Cys) + L-cysteine + ATP = L-cysteinyl-tRNA(Cys) + AMP + diphosphate. The chain is Cysteine--tRNA ligase from Mycoplasma mycoides subsp. mycoides SC (strain CCUG 32753 / NCTC 10114 / PG1).